Reading from the N-terminus, the 265-residue chain is Histidine racemase (265 aa).

Cysteine 67 serves as the catalytic Proton acceptor. Cysteine 209 (proton donor) is an active-site residue.

It belongs to the histidine racemase family. As to quaternary structure, homodimer.

It catalyses the reaction L-histidine = D-histidine. With respect to regulation, activity is not affected by buffer composition (PO(4) or Tris), ions (SO(4)(2-), Mg(2+) and EDTA) or the PLP inhibitor hydroxylamine. However, the activity is hindered by iodoacetamide and Hg(2+), which are known inhibitors of enzymes with catalytic thiols. Functionally, cofactor-independent isomerase that catalyzes the reversible conversion of L-histidine to D-histidine. Shows weak activity with L,L-lanthionine. The catalytic turnover is 10'000-fold faster with L-histidine than with L,L-lanthionine. May play a role in growth of F.nucleatum. This Fusobacterium nucleatum subsp. nucleatum (strain ATCC 25586 / DSM 15643 / BCRC 10681 / CIP 101130 / JCM 8532 / KCTC 2640 / LMG 13131 / VPI 4355) protein is Histidine racemase.